Reading from the N-terminus, the 209-residue chain is Iron-sulfur cluster assembly 2 homolog, mitochondrial (209 aa).

The transit peptide at 1–27 directs the protein to the mitochondrion; sequence MIRSIFKKNSSLPYFLKRSFITKPHSI. Fe cation is bound by residues Cys-134, Cys-199, and Cys-201.

It belongs to the HesB/IscA family. The cofactor is Fe cation.

The protein localises to the mitochondrion. Its function is as follows. Involved in the maturation of mitochondrial 4Fe-4S proteins functioning late in the iron-sulfur cluster assembly pathway. May be involved in the binding of an intermediate of Fe/S cluster assembly. The protein is Iron-sulfur cluster assembly 2 homolog, mitochondrial (isca2) of Dictyostelium discoideum (Social amoeba).